Here is a 283-residue protein sequence, read N- to C-terminus: Phosphatidylserine decarboxylase proenzyme (283 aa).

Catalysis depends on charge relay system; for autoendoproteolytic cleavage activity residues D89, H146, and S249. The active-site Schiff-base intermediate with substrate; via pyruvic acid; for decarboxylase activity is the S249. S249 carries the post-translational modification Pyruvic acid (Ser); by autocatalysis.

This sequence belongs to the phosphatidylserine decarboxylase family. PSD-B subfamily. Prokaryotic type I sub-subfamily. Heterodimer of a large membrane-associated beta subunit and a small pyruvoyl-containing alpha subunit. Pyruvate is required as a cofactor. In terms of processing, is synthesized initially as an inactive proenzyme. Formation of the active enzyme involves a self-maturation process in which the active site pyruvoyl group is generated from an internal serine residue via an autocatalytic post-translational modification. Two non-identical subunits are generated from the proenzyme in this reaction, and the pyruvate is formed at the N-terminus of the alpha chain, which is derived from the carboxyl end of the proenzyme. The autoendoproteolytic cleavage occurs by a canonical serine protease mechanism, in which the side chain hydroxyl group of the serine supplies its oxygen atom to form the C-terminus of the beta chain, while the remainder of the serine residue undergoes an oxidative deamination to produce ammonia and the pyruvoyl prosthetic group on the alpha chain. During this reaction, the Ser that is part of the protease active site of the proenzyme becomes the pyruvoyl prosthetic group, which constitutes an essential element of the active site of the mature decarboxylase.

The protein resides in the cell membrane. The enzyme catalyses a 1,2-diacyl-sn-glycero-3-phospho-L-serine + H(+) = a 1,2-diacyl-sn-glycero-3-phosphoethanolamine + CO2. It participates in phospholipid metabolism; phosphatidylethanolamine biosynthesis; phosphatidylethanolamine from CDP-diacylglycerol: step 2/2. In terms of biological role, catalyzes the formation of phosphatidylethanolamine (PtdEtn) from phosphatidylserine (PtdSer). The protein is Phosphatidylserine decarboxylase proenzyme of Legionella pneumophila subsp. pneumophila (strain Philadelphia 1 / ATCC 33152 / DSM 7513).